An 87-amino-acid polypeptide reads, in one-letter code: uncharacterized protein (87 aa).

A signal peptide spans 1–23 (MAVSVLRLTVVLGLLVLFLTCYA). The disordered stretch occupies residues 24 to 44 (DDKPDKPDDKPDDSGKDPKPD).

It localises to the secreted. This is an uncharacterized protein from Homo sapiens (Human).